A 72-amino-acid polypeptide reads, in one-letter code: Translation initiation factor IF-1 (72 aa).

The S1-like domain occupies A2–R72.

This sequence belongs to the IF-1 family. As to quaternary structure, component of the 30S ribosomal translation pre-initiation complex which assembles on the 30S ribosome in the order IF-2 and IF-3, IF-1 and N-formylmethionyl-tRNA(fMet); mRNA recruitment can occur at any time during PIC assembly.

The protein resides in the cytoplasm. Its function is as follows. One of the essential components for the initiation of protein synthesis. Stabilizes the binding of IF-2 and IF-3 on the 30S subunit to which N-formylmethionyl-tRNA(fMet) subsequently binds. Helps modulate mRNA selection, yielding the 30S pre-initiation complex (PIC). Upon addition of the 50S ribosomal subunit IF-1, IF-2 and IF-3 are released leaving the mature 70S translation initiation complex. This is Translation initiation factor IF-1 from Pasteurella multocida (strain Pm70).